Reading from the N-terminus, the 118-residue chain is Histone H2B.N (118 aa).

The protein belongs to the histone H2B family. In terms of assembly, the nucleosome is a histone octamer containing two molecules each of H2A, H2B, H3 and H4 assembled in one H3-H4 heterotetramer and two H2A-H2B heterodimers. The octamer wraps approximately 147 bp of DNA. In terms of tissue distribution, expressed in germline. Predominantly expressed in oocytes.

It is found in the nucleus. The protein localises to the chromosome. In terms of biological role, core component of nucleosome. Nucleosomes wrap and compact DNA into chromatin, limiting DNA accessibility to the cellular machineries which require DNA as a template. Histones thereby play a central role in transcription regulation, DNA repair, DNA replication and chromosomal stability. DNA accessibility is regulated via a complex set of post-translational modifications of histones, also called histone code, and nucleosome remodeling. This Homo sapiens (Human) protein is Histone H2B.N.